We begin with the raw amino-acid sequence, 346 residues long: Phosphoribosylformylglycinamidine cyclo-ligase (346 aa).

This sequence belongs to the AIR synthase family.

It is found in the cytoplasm. The catalysed reaction is 2-formamido-N(1)-(5-O-phospho-beta-D-ribosyl)acetamidine + ATP = 5-amino-1-(5-phospho-beta-D-ribosyl)imidazole + ADP + phosphate + H(+). It functions in the pathway purine metabolism; IMP biosynthesis via de novo pathway; 5-amino-1-(5-phospho-D-ribosyl)imidazole from N(2)-formyl-N(1)-(5-phospho-D-ribosyl)glycinamide: step 2/2. The sequence is that of Phosphoribosylformylglycinamidine cyclo-ligase from Bacillus mycoides (strain KBAB4) (Bacillus weihenstephanensis).